The chain runs to 197 residues: 5'-deoxynucleotidase plu3092 (197 aa).

Substrate is bound by residues 16-17 (RW) and histidine 31. An HD domain is found at 28–140 (VSEHSLQVAF…IKQADSLCAY (113 aa)). Positions 31, 66, and 67 each coordinate a divalent metal cation. Substrate contacts are provided by residues aspartate 67, 75-78 (DLPT), and aspartate 135. Aspartate 135 contributes to the a divalent metal cation binding site.

The protein belongs to the 5DNU family. In terms of assembly, homodimer. The cofactor is a divalent metal cation.

The protein resides in the cytoplasm. It catalyses the reaction a 2'-deoxyribonucleoside 5'-phosphate + H2O = a 2'-deoxyribonucleoside + phosphate. In terms of biological role, catalyzes the strictly specific dephosphorylation of 2'-deoxyribonucleoside 5'-monophosphates. The polypeptide is 5'-deoxynucleotidase plu3092 (Photorhabdus laumondii subsp. laumondii (strain DSM 15139 / CIP 105565 / TT01) (Photorhabdus luminescens subsp. laumondii)).